The sequence spans 67 residues: Small ribosomal subunit protein bS21 (67 aa).

The protein belongs to the bacterial ribosomal protein bS21 family.

The sequence is that of Small ribosomal subunit protein bS21 from Nitratidesulfovibrio vulgaris (strain DP4) (Desulfovibrio vulgaris).